The following is a 423-amino-acid chain: tRNA(Ile)-lysidine synthase (423 aa).

Position 18 to 23 (Ser-18 to Ser-23) interacts with ATP.

This sequence belongs to the tRNA(Ile)-lysidine synthase family.

It is found in the cytoplasm. It catalyses the reaction cytidine(34) in tRNA(Ile2) + L-lysine + ATP = lysidine(34) in tRNA(Ile2) + AMP + diphosphate + H(+). In terms of biological role, ligates lysine onto the cytidine present at position 34 of the AUA codon-specific tRNA(Ile) that contains the anticodon CAU, in an ATP-dependent manner. Cytidine is converted to lysidine, thus changing the amino acid specificity of the tRNA from methionine to isoleucine. The sequence is that of tRNA(Ile)-lysidine synthase from Aromatoleum aromaticum (strain DSM 19018 / LMG 30748 / EbN1) (Azoarcus sp. (strain EbN1)).